The chain runs to 510 residues: Maturase K (510 aa).

Belongs to the intron maturase 2 family. MatK subfamily.

It is found in the plastid. Its subcellular location is the chloroplast. In terms of biological role, usually encoded in the trnK tRNA gene intron. Probably assists in splicing its own and other chloroplast group II introns. In Populus alba (White poplar), this protein is Maturase K.